The sequence spans 434 residues: Enolase (434 aa).

Residues H158 and E167 each coordinate substrate. Residue E210 is the Proton donor of the active site. Residues D245, E294, and D319 each contribute to the Mg(2+) site. Substrate contacts are provided by E294 and D319. The active-site Proton acceptor is K344. Residues 371-374 (SHRS) and K395 each bind substrate.

Belongs to the enolase family. Homodimer. Mg(2+) is required as a cofactor.

It localises to the cytoplasm. It catalyses the reaction (2R)-2-phosphoglycerate = phosphoenolpyruvate + H2O. It participates in carbohydrate degradation; glycolysis; pyruvate from D-glyceraldehyde 3-phosphate: step 4/5. This is Enolase from Doryteuthis pealeii (Longfin inshore squid).